Consider the following 132-residue polypeptide: Fluoride-specific ion channel FluC (132 aa).

4 helical membrane passes run 6-26, 41-61, 73-93, and 104-124; these read VLQL…RFIV, GTLV…ILMI, FLIV…FETY, and AMLN…LGIW. Gly-80 and Thr-83 together coordinate Na(+).

Belongs to the fluoride channel Fluc/FEX (TC 1.A.43) family.

The protein localises to the cell inner membrane. The catalysed reaction is fluoride(in) = fluoride(out). Its activity is regulated as follows. Na(+) is not transported, but it plays an essential structural role and its presence is essential for fluoride channel function. Fluoride-specific ion channel. Important for reducing fluoride concentration in the cell, thus reducing its toxicity. This is Fluoride-specific ion channel FluC from Hydrogenovibrio crunogenus (strain DSM 25203 / XCL-2) (Thiomicrospira crunogena).